Consider the following 43-residue polypeptide: Protein PsbN (43 aa).

The chain crosses the membrane as a helical span at residues 5 to 27 (TFLSIFISAALLGITGYSIYTAF).

This sequence belongs to the PsbN family.

Its subcellular location is the plastid. The protein resides in the cyanelle thylakoid membrane. Its function is as follows. May play a role in photosystem I and II biogenesis. The polypeptide is Protein PsbN (Cyanophora paradoxa).